The chain runs to 95 residues: Small ribosomal subunit protein bS16 (95 aa).

The protein belongs to the bacterial ribosomal protein bS16 family.

In Thermotoga neapolitana (strain ATCC 49049 / DSM 4359 / NBRC 107923 / NS-E), this protein is Small ribosomal subunit protein bS16.